The sequence spans 543 residues: MATTLDLKSKEEKDAELDKRIEALRRKNEALIRRYQEIEEDRKKAELEGVAVTAPRKSRSMEKENMAVEEKSLGPSRRTPGTPRPPGASRGGRTHPQQGGRAGVGRASQGWEDGAGEQLRGGPGGRGRRGRGRGSPHLLGAGDNSTSDRKSKEWEERRRQNIEKMNEEMEKIAEYERNQREGVLEPNPVRNFLDDPRRRGGPLEESERDRREGSRRHGRNWGGSDFERVRSGLEQERQGRRAGLGSGGDMTMSMTGRERSEYLRWKQEREKIDQERLQRHRKPTGQWRREWDAEKTDGMFKDGPAPTHELSHRYDDQAWARPPKPPTFGEFLSQHKAEVSSRRRRKNSRPQAKVAPRAYSDHDNRWETREEAVSSAPESSQSISLEETPTQASETPAPAHRPPEEDGEEDVGEEEEGEEEGEDEEDEEWEDVSEDVTEEEEEEEEEFEEDEEGPKDQEAATVPDHQPEAEPAGKPTCEQVDPVPAGSQELLSPVPVEPPIPFSPSEDHQPVSDWGEEMELNSPGTAHLPGTHSSGEAWPFANA.

Basic and acidic residues-rich tracts occupy residues isoleucine 38–leucine 47 and arginine 59–serine 72. Residues isoleucine 38 to alanine 543 are disordered. Threonine 94 bears the Phosphothreonine mark. Omega-N-methylarginine is present on residues arginine 106, arginine 120, arginine 126, and arginine 128. Asymmetric dimethylarginine occurs at positions 129, 131, and 133. Serine 135 carries the post-translational modification Phosphoserine. Composition is skewed to basic and acidic residues over residues threonine 146–valine 183, phenylalanine 192–glutamate 212, and aspartate 225–glycine 239. A coiled-coil region spans residues serine 147–valine 183. Phosphoserine is present on residues serine 246 and serine 253. Composition is skewed to basic and acidic residues over residues glycine 256 to leucine 277, tryptophan 287 to phenylalanine 300, glutamate 309 to alanine 318, and tyrosine 359 to alanine 372. A phosphoserine mark is found at serine 374 and serine 384. Residues alanine 376–glutamate 394 are compositionally biased toward polar residues. Residues glutamate 405–glycine 453 show a composition bias toward acidic residues. Positions glutamate 422–glutamate 452 form a coiled coil. Serine 533 is subject to Phosphoserine.

As to quaternary structure, probable component of the exon junction complex (EJC); the association is RNA-dependent.

In terms of biological role, probable component of the exon junction complex (EJC), a multiprotein complex that associates immediately upstream of the exon-exon junction on mRNAs and serves as a positional landmark for the intron exon structure of genes and directs post-transcriptional processes in the cytoplasm such as mRNA export, nonsense-mediated mRNA decay (NMD) or translation. This Mus musculus (Mouse) protein is Coiled-coil domain-containing protein 9 (Ccdc9).